The sequence spans 593 residues: Glutamyl-tRNA(Gln) amidotransferase subunit B, mitochondrial (593 aa).

Residues 1–49 (MLRPWLRQSTRAARSLPCCQCPRPYSSRLPTLTSPSSSVRRLQTSASES) constitute a mitochondrion transit peptide. The span at 27 to 42 (SRLPTLTSPSSSVRRL) shows a compositional bias: low complexity. The tract at residues 27–80 (SRLPTLTSPSSSVRRLQTSASESQDRVPLRKQLKQNAKALKAEKRQRRESEEAS) is disordered. Positions 66 to 80 (LKAEKRQRRESEEAS) are enriched in basic and acidic residues.

This sequence belongs to the GatB/GatE family. GatB subfamily. Subunit of the heterotrimeric GatCAB amidotransferase (AdT) complex, composed of A, B and C subunits.

The protein resides in the mitochondrion. It carries out the reaction L-glutamyl-tRNA(Gln) + L-glutamine + ATP + H2O = L-glutaminyl-tRNA(Gln) + L-glutamate + ADP + phosphate + H(+). Functionally, allows the formation of correctly charged Gln-tRNA(Gln) through the transamidation of misacylated Glu-tRNA(Gln) in the mitochondria. The reaction takes place in the presence of glutamine and ATP through an activated gamma-phospho-Glu-tRNA(Gln). This is Glutamyl-tRNA(Gln) amidotransferase subunit B, mitochondrial from Aspergillus oryzae (strain ATCC 42149 / RIB 40) (Yellow koji mold).